A 126-amino-acid polypeptide reads, in one-letter code: Fluoride-specific ion channel FluC 3 (126 aa).

A run of 4 helical transmembrane segments spans residues 7–27 (MWVG…GLSI), 37–57 (LGTF…SILF), 68–87 (LMNT…FSSM), and 101–121 (AIAA…AAFG). Na(+) contacts are provided by G79 and T82.

It belongs to the fluoride channel Fluc/FEX (TC 1.A.43) family.

The protein localises to the cell inner membrane. The catalysed reaction is fluoride(in) = fluoride(out). With respect to regulation, na(+) is not transported, but it plays an essential structural role and its presence is essential for fluoride channel function. Fluoride-specific ion channel. Important for reducing fluoride concentration in the cell, thus reducing its toxicity. In Yersinia pestis, this protein is Fluoride-specific ion channel FluC 3.